A 208-amino-acid chain; its full sequence is Uridine kinase (208 aa).

11–18 (GGTGSGKS) lines the ATP pocket.

It belongs to the uridine kinase family.

The protein resides in the cytoplasm. The enzyme catalyses uridine + ATP = UMP + ADP + H(+). The catalysed reaction is cytidine + ATP = CMP + ADP + H(+). It functions in the pathway pyrimidine metabolism; CTP biosynthesis via salvage pathway; CTP from cytidine: step 1/3. Its pathway is pyrimidine metabolism; UMP biosynthesis via salvage pathway; UMP from uridine: step 1/1. In Clostridium novyi (strain NT), this protein is Uridine kinase.